We begin with the raw amino-acid sequence, 306 residues long: UDP-N-acetylenolpyruvoylglucosamine reductase (306 aa).

Positions 34-198 (VGGPADLLIT…LEVTFKLHNS (165 aa)) constitute an FAD-binding PCMH-type domain. Arg177 is an active-site residue. The Proton donor role is filled by Ser227. Residue Glu297 is part of the active site.

The protein belongs to the MurB family. Requires FAD as cofactor.

The protein localises to the cytoplasm. It carries out the reaction UDP-N-acetyl-alpha-D-muramate + NADP(+) = UDP-N-acetyl-3-O-(1-carboxyvinyl)-alpha-D-glucosamine + NADPH + H(+). It participates in cell wall biogenesis; peptidoglycan biosynthesis. Its function is as follows. Cell wall formation. This chain is UDP-N-acetylenolpyruvoylglucosamine reductase, found in Clostridium botulinum (strain 657 / Type Ba4).